Here is a 749-residue protein sequence, read N- to C-terminus: NAD(P)H-quinone oxidoreductase subunit 5, chloroplastic (749 aa).

Transmembrane regions (helical) follow at residues 9 to 29 (WIIP…LLLF), 40 to 60 (WSFT…NLSI), 89 to 109 (IDPL…MVLI), 125 to 145 (FAYM…SNLI), 147 to 167 (IYIF…FWFT), 185 to 205 (GDFG…SFEF), 221 to 241 (NGTN…GAVA), 260 to 280 (TPIS…FLVA), 285 to 305 (LFIV…ITIL), 329 to 349 (LGYT…FHLI), 356 to 376 (ALLF…VGYS), 398 to 418 (NTFL…CFWS), 427 to 447 (WLYS…TAFY), 553 to 573 (LFPL…GIPF), 607 to 627 (FVIN…LASL), and 727 to 747 (SYLF…YFFL).

This sequence belongs to the complex I subunit 5 family. NDH is composed of at least 16 different subunits, 5 of which are encoded in the nucleus.

It localises to the plastid. The protein resides in the chloroplast thylakoid membrane. The catalysed reaction is a plastoquinone + NADH + (n+1) H(+)(in) = a plastoquinol + NAD(+) + n H(+)(out). It carries out the reaction a plastoquinone + NADPH + (n+1) H(+)(in) = a plastoquinol + NADP(+) + n H(+)(out). Its function is as follows. NDH shuttles electrons from NAD(P)H:plastoquinone, via FMN and iron-sulfur (Fe-S) centers, to quinones in the photosynthetic chain and possibly in a chloroplast respiratory chain. The immediate electron acceptor for the enzyme in this species is believed to be plastoquinone. Couples the redox reaction to proton translocation, and thus conserves the redox energy in a proton gradient. The chain is NAD(P)H-quinone oxidoreductase subunit 5, chloroplastic (ndhF) from Vitis vinifera (Grape).